The following is a 248-amino-acid chain: Leucyl/phenylalanyl-tRNA--protein transferase (248 aa).

It belongs to the L/F-transferase family.

It is found in the cytoplasm. The catalysed reaction is N-terminal L-lysyl-[protein] + L-leucyl-tRNA(Leu) = N-terminal L-leucyl-L-lysyl-[protein] + tRNA(Leu) + H(+). The enzyme catalyses N-terminal L-arginyl-[protein] + L-leucyl-tRNA(Leu) = N-terminal L-leucyl-L-arginyl-[protein] + tRNA(Leu) + H(+). It carries out the reaction L-phenylalanyl-tRNA(Phe) + an N-terminal L-alpha-aminoacyl-[protein] = an N-terminal L-phenylalanyl-L-alpha-aminoacyl-[protein] + tRNA(Phe). Its function is as follows. Functions in the N-end rule pathway of protein degradation where it conjugates Leu, Phe and, less efficiently, Met from aminoacyl-tRNAs to the N-termini of proteins containing an N-terminal arginine or lysine. This Oleidesulfovibrio alaskensis (strain ATCC BAA-1058 / DSM 17464 / G20) (Desulfovibrio alaskensis) protein is Leucyl/phenylalanyl-tRNA--protein transferase.